A 406-amino-acid polypeptide reads, in one-letter code: (R)-benzylsuccinyl-CoA dehydrogenase (406 aa).

The protein belongs to the acyl-CoA dehydrogenase family. As to quaternary structure, homotetramer. FAD serves as cofactor.

It carries out the reaction (R)-2-benzylsuccinyl-CoA + oxidized [electron-transfer flavoprotein] + H(+) = (E)-2-benzylidenesuccinyl-CoA + reduced [electron-transfer flavoprotein]. The protein operates within xenobiotic degradation; toluene degradation. Its activity is regulated as follows. Inhibited by (S)-benzylsuccinyl-CoA. Functionally, catalyzes the oxidation of benzylsuccinyl-CoA to benzylidenesuccinyl-CoA. This Thauera aromatica protein is (R)-benzylsuccinyl-CoA dehydrogenase (bbsG).